A 293-amino-acid chain; its full sequence is MQLGLWFGLFAVAAAPLVSANYGSPGRGAGRQIQYLPGGPSEGLEEYVNAATGGSQPSANQLTAQAEIQIVGEARRLGRVQAQLQALNNNPTYQKLKNSEDIAESLAETNLASNIRQGKINVVSPQFVDQHLFRSLLVPSGHNNHQVIATQPLPPIIVHQPGAPPAHVNSGPPTVVRGNPVIYKIKPSVIYQQEVINKVPTPLSLNPVYVKVYKPGKKIEAPLAPVVAPVYSQPQSYGQPQAYNQPQAYSQPQSYGNSGSSGAGNSGPSSDSYAAGAETPLYASPAPYGSPSY.

The first 20 residues, 1 to 20, serve as a signal peptide directing secretion; sequence MQLGLWFGLFAVAAAPLVSA. Polar residues predominate over residues 235 to 253; sequence QSYGQPQAYNQPQAYSQPQ. The disordered stretch occupies residues 235–293; sequence QSYGQPQAYNQPQAYSQPQSYGNSGSSGAGNSGPSSDSYAAGAETPLYASPAPYGSPSY.

This sequence belongs to the chorion protein S36 family.

The protein localises to the secreted. In terms of biological role, chorion membrane (egg shell) protein; protects the egg from the environment. The chain is Chorion protein S36 (Cp36) from Drosophila virilis (Fruit fly).